The sequence spans 378 residues: MVFRVLQTDGDARVGKLTCHHGIIETPAFIPVGTYGVVKSVTSQEVAESGAQIILSNTFHLWLRPGLEIIKIHQNLHKFMNWMGPIITDSGGFQVFSLNKLRKITESGVYFKDPVNGSTIFLTPEKSMDIQYHLGSDIVLVFDECVSYPSTWEYIKNSVEISLNWAERSRLHFDKLHNSNMLFAIIQGGMYEELRNRSAQELINIKFDGYAIGGLSVGETPQERFRIVSYVCKIIPFDKPRYLMGVGKPQDLIEAVCLGVDMFDCVIPTRNARNGYLFTNNGVVRIRNAKYESDLDPIEEDCDCYTCQRYYSRSYLHYLDRCNESLGIRLNTIHNLRYYQRLMEEIRQSIRMKKLRKFVEAFNYKFNSVSTNNYLSNI.

Asp-89 (proton acceptor) is an active-site residue. Substrate-binding positions include 89–93 (DSGGF), Asp-143, Gln-187, and Gly-214. Residues 245 to 251 (GVGKPQD) are RNA binding. Catalysis depends on Asp-264, which acts as the Nucleophile. Residues 269-273 (TRNAR) form an RNA binding; important for wobble base 34 recognition region. Positions 302, 304, 307, and 334 each coordinate Zn(2+).

It belongs to the queuine tRNA-ribosyltransferase family. Homodimer. Within each dimer, one monomer is responsible for RNA recognition and catalysis, while the other monomer binds to the replacement base PreQ1. Zn(2+) serves as cofactor.

It carries out the reaction 7-aminomethyl-7-carbaguanine + guanosine(34) in tRNA = 7-aminomethyl-7-carbaguanosine(34) in tRNA + guanine. Its pathway is tRNA modification; tRNA-queuosine biosynthesis. In terms of biological role, catalyzes the base-exchange of a guanine (G) residue with the queuine precursor 7-aminomethyl-7-deazaguanine (PreQ1) at position 34 (anticodon wobble position) in tRNAs with GU(N) anticodons (tRNA-Asp, -Asn, -His and -Tyr). Catalysis occurs through a double-displacement mechanism. The nucleophile active site attacks the C1' of nucleotide 34 to detach the guanine base from the RNA, forming a covalent enzyme-RNA intermediate. The proton acceptor active site deprotonates the incoming PreQ1, allowing a nucleophilic attack on the C1' of the ribose to form the product. After dissociation, two additional enzymatic reactions on the tRNA convert PreQ1 to queuine (Q), resulting in the hypermodified nucleoside queuosine (7-(((4,5-cis-dihydroxy-2-cyclopenten-1-yl)amino)methyl)-7-deazaguanosine). This is Queuine tRNA-ribosyltransferase from Blochmanniella floridana.